A 192-amino-acid polypeptide reads, in one-letter code: Ribonuclease HII (192 aa).

In terms of domain architecture, RNase H type-2 spans 2-187 (KNLCGIDEAG…KALGENEIGV (186 aa)). Positions 8, 9, and 97 each coordinate a divalent metal cation.

This sequence belongs to the RNase HII family. Mn(2+) is required as a cofactor. Mg(2+) serves as cofactor.

It is found in the cytoplasm. It carries out the reaction Endonucleolytic cleavage to 5'-phosphomonoester.. Functionally, endonuclease that specifically degrades the RNA of RNA-DNA hybrids. This is Ribonuclease HII from Aliarcobacter butzleri (strain RM4018) (Arcobacter butzleri).